The following is a 31-amino-acid chain: Hyaluronidase (31 aa).

It belongs to the glycosyl hydrolase 56 family. Post-translationally, contains 2 disulfide bonds. N-glycosylated on at least two Asn residues by identical heptasaccharide units composed of Man, GlcNAc, and Fuc residues in the molar ration of 3:2:2. Expressed by the venom gland.

It localises to the secreted. It catalyses the reaction Random hydrolysis of (1-&gt;4)-linkages between N-acetyl-beta-D-glucosamine and D-glucuronate residues in hyaluronate.. Functionally, hydrolyzes high molecular weight hyaluronic acid to produce small oligosaccharides. The chain is Hyaluronidase from Vespula maculifrons (Eastern yellow jacket).